We begin with the raw amino-acid sequence, 119 residues long: Large ribosomal subunit protein bL20 (119 aa).

It belongs to the bacterial ribosomal protein bL20 family.

Functionally, binds directly to 23S ribosomal RNA and is necessary for the in vitro assembly process of the 50S ribosomal subunit. It is not involved in the protein synthesizing functions of that subunit. This chain is Large ribosomal subunit protein bL20, found in Streptococcus thermophilus (strain ATCC BAA-491 / LMD-9).